The primary structure comprises 352 residues: Protein NDRG4 (352 aa).

3 positions are modified to phosphoserine: S298, S317, and S323. Low complexity predominate over residues 314-323 (RTASLTSASS). A disordered region spans residues 314–352 (RTASLTSASSVDGSRPQACTHSESSEGLGQVNHTMEVSC). A compositionally biased stretch (polar residues) spans 330–352 (QACTHSESSEGLGQVNHTMEVSC).

Belongs to the NDRG family. Post-translationally, phosphorylated in an aortic smooth muscle cell line, following PDGF treatment. As to expression, expressed predominantly in brain and heart (at protein level). In the brain, detected in astrocytes. Isoform 1 and isoform 2 are only expressed in brain. Isoform 3 is expressed in both heart and brain. Up-regulated in glioblastoma multiforme cells.

The protein localises to the cytoplasm. Its subcellular location is the cytosol. Contributes to the maintenance of intracerebral BDNF levels within the normal range, which is necessary for the preservation of spatial learning and the resistance to neuronal cell death caused by ischemic stress. May enhance growth factor-induced ERK1 and ERK2 phosphorylation, including that induced by PDGF and FGF. May attenuate NGF-promoted ELK1 phosphorylation in a microtubule-dependent manner. In Homo sapiens (Human), this protein is Protein NDRG4 (NDRG4).